Here is a 450-residue protein sequence, read N- to C-terminus: Phosphoglucosamine mutase (450 aa).

Ser-101 serves as the catalytic Phosphoserine intermediate. 4 residues coordinate Mg(2+): Ser-101, Asp-242, Asp-244, and Asp-246. Position 101 is a phosphoserine (Ser-101).

It belongs to the phosphohexose mutase family. Mg(2+) serves as cofactor. Activated by phosphorylation.

The enzyme catalyses alpha-D-glucosamine 1-phosphate = D-glucosamine 6-phosphate. In terms of biological role, catalyzes the conversion of glucosamine-6-phosphate to glucosamine-1-phosphate. This chain is Phosphoglucosamine mutase, found in Rhodopseudomonas palustris (strain HaA2).